The primary structure comprises 309 residues: Coenzyme PQQ synthesis protein B (309 aa).

Belongs to the PqqB family.

It participates in cofactor biosynthesis; pyrroloquinoline quinone biosynthesis. May be involved in the transport of PQQ or its precursor to the periplasm. The protein is Coenzyme PQQ synthesis protein B of Nitrosococcus oceani (strain ATCC 19707 / BCRC 17464 / JCM 30415 / NCIMB 11848 / C-107).